Reading from the N-terminus, the 242-residue chain is Phosphoribosyl isomerase A (242 aa).

Asp-12 serves as the catalytic Proton acceptor. Asp-131 (proton donor) is an active-site residue.

Belongs to the HisA/HisF family.

The protein resides in the cytoplasm. It catalyses the reaction 1-(5-phospho-beta-D-ribosyl)-5-[(5-phospho-beta-D-ribosylamino)methylideneamino]imidazole-4-carboxamide = 5-[(5-phospho-1-deoxy-D-ribulos-1-ylimino)methylamino]-1-(5-phospho-beta-D-ribosyl)imidazole-4-carboxamide. It carries out the reaction N-(5-phospho-beta-D-ribosyl)anthranilate = 1-(2-carboxyphenylamino)-1-deoxy-D-ribulose 5-phosphate. Its pathway is amino-acid biosynthesis; L-histidine biosynthesis; L-histidine from 5-phospho-alpha-D-ribose 1-diphosphate: step 4/9. The protein operates within amino-acid biosynthesis; L-tryptophan biosynthesis; L-tryptophan from chorismate: step 3/5. Functionally, involved in both the histidine and tryptophan biosynthetic pathways. This chain is Phosphoribosyl isomerase A, found in Streptomyces avermitilis (strain ATCC 31267 / DSM 46492 / JCM 5070 / NBRC 14893 / NCIMB 12804 / NRRL 8165 / MA-4680).